The sequence spans 345 residues: Phosphoribosylformylglycinamidine cyclo-ligase (345 aa).

It belongs to the AIR synthase family.

Its subcellular location is the cytoplasm. It catalyses the reaction 2-formamido-N(1)-(5-O-phospho-beta-D-ribosyl)acetamidine + ATP = 5-amino-1-(5-phospho-beta-D-ribosyl)imidazole + ADP + phosphate + H(+). The protein operates within purine metabolism; IMP biosynthesis via de novo pathway; 5-amino-1-(5-phospho-D-ribosyl)imidazole from N(2)-formyl-N(1)-(5-phospho-D-ribosyl)glycinamide: step 2/2. The sequence is that of Phosphoribosylformylglycinamidine cyclo-ligase from Actinobacillus pleuropneumoniae serotype 5b (strain L20).